The chain runs to 427 residues: GTPase Obg (427 aa).

Positions 1–158 (MFVDKVKVYV…RDVILELKVL (158 aa)) constitute an Obg domain. The tract at residues 118 to 144 (KGGRGGRGNTRFATPANPAPELSENGE) is disordered. In terms of domain architecture, OBG-type G spans 159–329 (ADAGLVGFPS…LLRAIMDTIE (171 aa)). Residues 165–172 (GFPSVGKS), 190–194 (FTTIT), 212–215 (DLPG), 282–285 (NKMD), and 310–312 (SAL) contribute to the GTP site. S172 and T192 together coordinate Mg(2+). Residues 349–427 (KHDKEQDPFV…LLEFEFEFIE (79 aa)) enclose the OCT domain.

Belongs to the TRAFAC class OBG-HflX-like GTPase superfamily. OBG GTPase family. In terms of assembly, monomer. Mg(2+) is required as a cofactor.

It localises to the cytoplasm. Its function is as follows. An essential GTPase which binds GTP, GDP and possibly (p)ppGpp with moderate affinity, with high nucleotide exchange rates and a fairly low GTP hydrolysis rate. Plays a role in control of the cell cycle, stress response, ribosome biogenesis and in those bacteria that undergo differentiation, in morphogenesis control. This Halalkalibacterium halodurans (strain ATCC BAA-125 / DSM 18197 / FERM 7344 / JCM 9153 / C-125) (Bacillus halodurans) protein is GTPase Obg.